Consider the following 1265-residue polypeptide: Protein transport protein SEC31 (1265 aa).

7 WD repeats span residues 6-46, 61-105, 116-156, 162-202, 209-252, 256-296, and 299-339; these read EIAR…ELWD, TVDN…KTKD, KHTG…EPFA, TPMD…EVLH, GGRA…APEK, GHKK…KLGE, and TTAN…PSVS. The stretch at 380 to 403 is one WD 8; interaction with SEC13 repeat; the sequence is SFGFGSKLVIINTDSSGKSTVKVD. The segment covering 457 to 480 has biased composition (basic and acidic residues); sequence KESLFEDANNDEKEATSPETKKEN. 3 disordered regions span residues 457-485, 765-784, and 793-1163; these read KESL…EDDF, VKSS…GQTR, and PAYA…IPEN. A compositionally biased stretch (pro residues) spans 794–810; that stretch reads AYAPPVQAPPVQAPQPP. Low complexity-rich tracts occupy residues 811–824, 865–875, 901–931, 939–951, and 969–987; these read LVQQ…QQQP, TPSSLSGTTSG, AKTA…FGSP, SQPG…SSAG, and SISR…TVPA. Residues 1004-1023 are compositionally biased toward polar residues; that stretch reads SDASQPPSSGFASPTLNSSP. 2 stretches are compositionally biased toward pro residues: residues 1062–1071 and 1083–1101; these read YAPPKNPYAV and APPP…PPQP.

Belongs to the WD repeat SEC31 family. As to quaternary structure, the COPII coat is composed of at least 5 proteins: the SEC23/24 complex, the SEC13/31 complex, and the protein SAR1. SEC13 and SEC31 make a 2:2 tetramer that forms the edge element of the COPII outer coat. The tetramer self-assembles in multiple copies to form the complete polyhedral cage. Interacts (via WD 8) with SEC13.

Its subcellular location is the cytoplasmic vesicle. The protein localises to the COPII-coated vesicle membrane. It is found in the endoplasmic reticulum membrane. Functionally, component of the coat protein complex II (COPII) which promotes the formation of transport vesicles from the endoplasmic reticulum (ER). The coat has two main functions, the physical deformation of the endoplasmic reticulum membrane into vesicles and the selection of cargo molecules. This is Protein transport protein SEC31 (PGA63) from Candida albicans (strain SC5314 / ATCC MYA-2876) (Yeast).